A 295-amino-acid polypeptide reads, in one-letter code: Autophagy-related protein 37 (295 aa).

The region spanning 5–103 (VDRVFVHALN…LIDTMHRYAT (99 aa)) is the ACB domain. Disordered regions lie at residues 124–162 (NSPS…PLKE) and 174–201 (LRSQ…RWQR). Over residues 125-153 (SPSSSLSSPRPNQSTGAGAQQPQQEPEQA) the composition is skewed to low complexity. A glycan (N-linked (GlcNAc...) asparagine) is linked at asparagine 136. Residues 244-264 (WLLVKHIFADLVILSVVLLWL) traverse the membrane as a helical segment.

This sequence belongs to the ATG37 family.

It localises to the peroxisome membrane. Functionally, acyl-CoA binding protein which acts as the peroxisome receptor for pexophagy. Required for both micropexophagy and macropexophagy, but not for the cytoplasm to vacuole transport (Cvt) or autophagy pathways. Required for functional micropexophagic apparatus (MIPA) and relocation of ATG11 to the peroxisome-sequestering arms of the vacuole. Binds palmitoyl-CoA but not oleyl-CoA. This is Autophagy-related protein 37 from Gibberella zeae (strain ATCC MYA-4620 / CBS 123657 / FGSC 9075 / NRRL 31084 / PH-1) (Wheat head blight fungus).